Reading from the N-terminus, the 261-residue chain is 5'-nucleotidase SurE (261 aa).

Residues Asp-17, Asp-18, Ser-48, and Asn-104 each coordinate a divalent metal cation.

This sequence belongs to the SurE nucleotidase family. A divalent metal cation serves as cofactor.

The protein localises to the cytoplasm. The enzyme catalyses a ribonucleoside 5'-phosphate + H2O = a ribonucleoside + phosphate. Nucleotidase that shows phosphatase activity on nucleoside 5'-monophosphates. This Deinococcus geothermalis (strain DSM 11300 / CIP 105573 / AG-3a) protein is 5'-nucleotidase SurE.